A 318-amino-acid polypeptide reads, in one-letter code: DNA repair nuclease/redox regulator APEX1 (318 aa).

The interval 1–33 (MPKRGKKGAVAEDGDELKTEPEAKKSKTAAKKN) is necessary for interaction with YBX1, binding to RNA, association together with NPM1 to rRNA, endoribonuclease activity on abasic RNA and localization in the nucleoli. The segment at 1–60 (MPKRGKKGAVAEDGDELKTEPEAKKSKTAAKKNDKEAAGEGPALYEDPPDQKTSPSGKPA) is disordered. An N6-acetyllysine; by EP300 mark is found at Lys-6 and Lys-7. The short motif at 8-13 (GAVAED) is the Nuclear localization signal (NLS) element. The span at 16–38 (ELKTEPEAKKSKTAAKKNDKEAA) shows a compositional bias: basic and acidic residues. The tract at residues 23 to 33 (AKKSKTAAKKN) is necessary for interaction with NPM1 and for efficient rRNA binding. An N6-acetyllysine mark is found at Lys-27, Lys-31, Lys-32, and Lys-35. Phosphoserine is present on Ser-54. The Nuclear export signal (NES) signature appears at 64 to 80 (ICSWNVDGLRAWIKKKG). Cys-65 bears the S-nitrosocysteine; alternate mark. A disulfide bridge links Cys-65 with Cys-93. Asp-70 serves as a coordination point for Mg(2+). S-nitrosocysteine; alternate is present on Cys-93. A Mg(2+)-binding site is contributed by Glu-96. Tyr-171 is a catalytic residue. Lys-197 is subject to N6-acetyllysine. Asp-210 and Asn-212 together coordinate Mg(2+). Asp-210 serves as the catalytic Proton donor/acceptor. Position 233 is a phosphothreonine; by CDK5 (Thr-233). Positions 289–318 (HSLLPALCDSKIRSKALGSDHCPITLYLAL) are mitochondrial targeting sequence (MTS). A Mg(2+)-binding site is contributed by Asp-308. Cys-310 carries the S-nitrosocysteine modification.

Belongs to the DNA repair enzymes AP/ExoA family. In terms of assembly, monomer. Homodimer; disulfide-linked. Component of the SET complex, composed of at least APEX1, SET, ANP32A, HMGB2, NME1 and TREX1. Associates with the dimer XRCC5/XRCC6 in a DNA-dependent manner. Interacts with SIRT1; the interaction is increased in the context of genotoxic stress. Interacts with HDAC1, HDAC2 and HDAC3; the interactions are not dependent on the APEX1 acetylation status. Interacts with XRCC1; the interaction is induced by SIRT1 and increased with the APEX1 acetylated form. Interacts with NPM1 (via N-terminal domain); the interaction is RNA-dependent and decreases in hydrogen peroxide-damaged cells. Interacts (via N-terminus) with YBX1 (via C-terminus); the interaction is increased in presence of APEX1 acetylated at Lys-6 and Lys-7. Interacts with HNRNPL; the interaction is DNA-dependent. Interacts (via N-terminus) with KPNA1 and KPNA2. Interacts with TXN; the interaction stimulates the FOS/JUN AP-1 complex DNA-binding activity in a redox-dependent manner. Interacts with GZMA, KRT8, MDM2, POLB, PRDX6, PRPF19, RPLP0, TOMM20 and WDR77. Binds to CDK5. Mg(2+) is required as a cofactor. Requires Mn(2+) as cofactor. In terms of processing, phosphorylated. Phosphorylation by kinase PKC or casein kinase CK2 results in enhanced redox activity that stimulates binding of the FOS/JUN AP-1 complex to its cognate binding site. AP-endodeoxyribonuclease activity is not affected by CK2-mediated phosphorylation. Phosphorylation of Thr-233 by CDK5 in response to MPP(+)/MPTP (1-methyl-4-phenylpyridinium) reduces AP-endodeoxyribonuclease activity resulting in accumulation of DNA damage and contributing to neuronal death. Post-translationally, acetylated on Lys-6 and Lys-7. Acetylation is increased by the transcriptional coactivator EP300 acetyltransferase, genotoxic agents like H(2)O(2) and methyl methanesulfonate (MMS). Acetylation increases its binding affinity to the negative calcium response element (nCaRE) DNA promoter. The acetylated form induces a stronger binding of YBX1 to the Y-box sequence in the MDR1 promoter than the unacetylated form. Deacetylated on lysines. Lys-6 and Lys-7 are deacetylated by SIRT1. Cleaved at Lys-31 by granzyme A to create the mitochondrial form; leading in reduction of binding to DNA, AP endodeoxyribonuclease activity, redox activation of transcription factors and to enhanced cell death. Cleaved by granzyme K; leading to intracellular ROS accumulation and enhanced cell death after oxidative stress. In terms of processing, cys-69 and Cys-93 are nitrosylated in response to nitric oxide (NO) and lead to the exposure of the nuclear export signal (NES). Post-translationally, ubiquitinated by MDM2; leading to translocation to the cytoplasm and proteasomal degradation.

The protein resides in the nucleus. It localises to the nucleolus. The protein localises to the nucleus speckle. Its subcellular location is the endoplasmic reticulum. It is found in the cytoplasm. The protein resides in the mitochondrion. The catalysed reaction is Exonucleolytic cleavage in the 3'- to 5'-direction to yield nucleoside 5'-phosphates.. With respect to regulation, NPM1 stimulates endodeoxyribonuclease activity on double-stranded DNA with AP sites, but inhibits endoribonuclease activity on single-stranded RNA containing AP sites. Its function is as follows. Multifunctional protein that plays a central role in the cellular response to oxidative stress. The two major activities of APEX1 are DNA repair and redox regulation of transcriptional factors. Functions as an apurinic/apyrimidinic (AP) endodeoxyribonuclease in the DNA base excision repair (BER) pathway of DNA lesions induced by oxidative and alkylating agents. Initiates repair of AP sites in DNA by catalyzing hydrolytic incision of the phosphodiester backbone immediately adjacent to the damage, generating a single-strand break with 5'-deoxyribose phosphate and 3'-hydroxyl ends. Also incises at AP sites in the DNA strand of DNA/RNA hybrids, single-stranded DNA regions of R-loop structures, and single-stranded RNA molecules. Has 3'-5' exoribonuclease activity on mismatched deoxyribonucleotides at the 3' termini of nicked or gapped DNA molecules during short-patch BER. Possesses DNA 3' phosphodiesterase activity capable of removing lesions (such as phosphoglycolate) blocking the 3' side of DNA strand breaks. May also play a role in the epigenetic regulation of gene expression by participating in DNA demethylation. Acts as a loading factor for POLB onto non-incised AP sites in DNA and stimulates the 5'-terminal deoxyribose 5'-phosphate (dRp) excision activity of POLB. Plays a role in the protection from granzyme-mediated cellular repair leading to cell death. Also involved in the DNA cleavage step of class switch recombination (CSR). On the other hand, APEX1 also exerts reversible nuclear redox activity to regulate DNA binding affinity and transcriptional activity of transcriptional factors by controlling the redox status of their DNA-binding domain, such as the FOS/JUN AP-1 complex after exposure to IR. Involved in calcium-dependent down-regulation of parathyroid hormone (PTH) expression by binding to negative calcium response elements (nCaREs). Together with HNRNPL or the dimer XRCC5/XRCC6, associates with nCaRE, acting as an activator of transcriptional repression. Stimulates the YBX1-mediated MDR1 promoter activity, when acetylated at Lys-6 and Lys-7, leading to drug resistance. Also acts as an endoribonuclease involved in the control of single-stranded RNA metabolism. Plays a role in regulating MYC mRNA turnover by preferentially cleaving in between UA and CA dinucleotides of the MYC coding region determinant (CRD). In association with NMD1, plays a role in the rRNA quality control process during cell cycle progression. Associates, together with YBX1, on the MDR1 promoter. Together with NPM1, associates with rRNA. Binds DNA and RNA. This is DNA repair nuclease/redox regulator APEX1 (APEX1) from Gorilla gorilla gorilla (Western lowland gorilla).